A 460-amino-acid chain; its full sequence is Phosphoglucosamine mutase (460 aa).

The active-site Phosphoserine intermediate is the S102. Mg(2+) is bound by residues S102, D241, D243, and D245. A Phosphoserine modification is found at S102.

The protein belongs to the phosphohexose mutase family. It depends on Mg(2+) as a cofactor. In terms of processing, activated by phosphorylation.

It carries out the reaction alpha-D-glucosamine 1-phosphate = D-glucosamine 6-phosphate. In terms of biological role, catalyzes the conversion of glucosamine-6-phosphate to glucosamine-1-phosphate. The sequence is that of Phosphoglucosamine mutase from Verminephrobacter eiseniae (strain EF01-2).